The chain runs to 459 residues: Exodeoxyribonuclease 7 large subunit (459 aa).

The protein belongs to the XseA family. Heterooligomer composed of large and small subunits.

It localises to the cytoplasm. It carries out the reaction Exonucleolytic cleavage in either 5'- to 3'- or 3'- to 5'-direction to yield nucleoside 5'-phosphates.. In terms of biological role, bidirectionally degrades single-stranded DNA into large acid-insoluble oligonucleotides, which are then degraded further into small acid-soluble oligonucleotides. The protein is Exodeoxyribonuclease 7 large subunit of Pseudomonas fluorescens (strain SBW25).